The sequence spans 162 residues: UPF0178 protein RHOS4_24670 (162 aa).

Belongs to the UPF0178 family.

The protein is UPF0178 protein RHOS4_24670 of Cereibacter sphaeroides (strain ATCC 17023 / DSM 158 / JCM 6121 / CCUG 31486 / LMG 2827 / NBRC 12203 / NCIMB 8253 / ATH 2.4.1.) (Rhodobacter sphaeroides).